Reading from the N-terminus, the 240-residue chain is Phosphoribosylaminoimidazole-succinocarboxamide synthase (240 aa).

The protein belongs to the SAICAR synthetase family.

It catalyses the reaction 5-amino-1-(5-phospho-D-ribosyl)imidazole-4-carboxylate + L-aspartate + ATP = (2S)-2-[5-amino-1-(5-phospho-beta-D-ribosyl)imidazole-4-carboxamido]succinate + ADP + phosphate + 2 H(+). Its pathway is purine metabolism; IMP biosynthesis via de novo pathway; 5-amino-1-(5-phospho-D-ribosyl)imidazole-4-carboxamide from 5-amino-1-(5-phospho-D-ribosyl)imidazole-4-carboxylate: step 1/2. The polypeptide is Phosphoribosylaminoimidazole-succinocarboxamide synthase (Wolbachia sp. subsp. Drosophila simulans (strain wRi)).